We begin with the raw amino-acid sequence, 119 residues long: Ribonuclease P protein component (119 aa).

Belongs to the RnpA family. In terms of assembly, consists of a catalytic RNA component (M1 or rnpB) and a protein subunit.

The catalysed reaction is Endonucleolytic cleavage of RNA, removing 5'-extranucleotides from tRNA precursor.. In terms of biological role, RNaseP catalyzes the removal of the 5'-leader sequence from pre-tRNA to produce the mature 5'-terminus. It can also cleave other RNA substrates such as 4.5S RNA. The protein component plays an auxiliary but essential role in vivo by binding to the 5'-leader sequence and broadening the substrate specificity of the ribozyme. This Photorhabdus laumondii subsp. laumondii (strain DSM 15139 / CIP 105565 / TT01) (Photorhabdus luminescens subsp. laumondii) protein is Ribonuclease P protein component.